Consider the following 132-residue polypeptide: MPNHDYRELAAVFAGGALGALARAALSALAIPDPARWPWPTFTVNVVGAFLVGYFTTRLLERLPLSSYRRPLLGTGLCGGLTTFSTMQVETISMIEHGHWGLAAAYSVVSITLGLLAVHLATVLVRRVRIRR.

The next 4 membrane-spanning stretches (helical) occupy residues 11–31, 37–57, 70–92, and 105–125; these read AVFA…ALAI, WPWP…YFTT, RPLL…VETI, and AYSV…TVLV. Na(+)-binding residues include G79 and T82.

This sequence belongs to the fluoride channel Fluc/FEX (TC 1.A.43) family.

It localises to the cell membrane. It carries out the reaction fluoride(in) = fluoride(out). Its activity is regulated as follows. Na(+) is not transported, but it plays an essential structural role and its presence is essential for fluoride channel function. Functionally, fluoride-specific ion channel. Important for reducing fluoride concentration in the cell, thus reducing its toxicity. The protein is Fluoride-specific ion channel FluC 1 of Mycobacterium bovis (strain ATCC BAA-935 / AF2122/97).